We begin with the raw amino-acid sequence, 195 residues long: Imidazoleglycerol-phosphate dehydratase (195 aa).

It belongs to the imidazoleglycerol-phosphate dehydratase family.

The protein resides in the cytoplasm. The catalysed reaction is D-erythro-1-(imidazol-4-yl)glycerol 3-phosphate = 3-(imidazol-4-yl)-2-oxopropyl phosphate + H2O. Its pathway is amino-acid biosynthesis; L-histidine biosynthesis; L-histidine from 5-phospho-alpha-D-ribose 1-diphosphate: step 6/9. The chain is Imidazoleglycerol-phosphate dehydratase from Pelotomaculum thermopropionicum (strain DSM 13744 / JCM 10971 / SI).